Reading from the N-terminus, the 387-residue chain is Protein RecA (387 aa).

80–87 (GPESSGKT) contacts ATP. The disordered stretch occupies residues 348 to 387 (LDDSEVAETEEETTASKTKAKAKKEEKXVETEEIELELQD). Composition is skewed to acidic residues over residues 349–360 (DDSEVAETEEET) and 378–387 (TEEIELELQD).

The protein belongs to the RecA family.

The protein localises to the cytoplasm. In terms of biological role, can catalyze the hydrolysis of ATP in the presence of single-stranded DNA, the ATP-dependent uptake of single-stranded DNA by duplex DNA, and the ATP-dependent hybridization of homologous single-stranded DNAs. It interacts with LexA causing its activation and leading to its autocatalytic cleavage. The sequence is that of Protein RecA from Lactococcus lactis subsp. cremoris (Streptococcus cremoris).